The sequence spans 506 residues: Maturase K (506 aa).

This sequence belongs to the intron maturase 2 family. MatK subfamily.

It localises to the plastid. Its subcellular location is the chloroplast. In terms of biological role, usually encoded in the trnK tRNA gene intron. Probably assists in splicing its own and other chloroplast group II introns. This chain is Maturase K, found in Arabis alpina (Alpine rock-cress).